Consider the following 279-residue polypeptide: uncharacterized protein (279 aa).

6 helical membrane passes run 29 to 49 (PYNMIAGAIGAVVLTILALVF), 77 to 97 (VLYALAPLIPLVILVIGGTSL), 105 to 125 (WTKMGVPQAMLIGAIYGIIVT), 147 to 167 (VLGIIIAASVFVAGLKSTGAV), 186 to 206 (TIGPFLMGLITGSGDAAAIAF), and 240 to 260 (PIAGVTIVCAGLAMVSPVEMV).

Belongs to the DcuC/DcuD transporter (TC 2.A.61) family.

The protein resides in the cell membrane. This is an uncharacterized protein from Haemophilus influenzae (strain ATCC 51907 / DSM 11121 / KW20 / Rd).